The following is a 417-amino-acid chain: Serine hydroxymethyltransferase (417 aa).

Residues Leu-121 and 125-127 (GHL) each bind (6S)-5,6,7,8-tetrahydrofolate. N6-(pyridoxal phosphate)lysine is present on Lys-229. 355 to 357 (SPF) provides a ligand contact to (6S)-5,6,7,8-tetrahydrofolate.

The protein belongs to the SHMT family. In terms of assembly, homodimer. It depends on pyridoxal 5'-phosphate as a cofactor.

The protein resides in the cytoplasm. It catalyses the reaction (6R)-5,10-methylene-5,6,7,8-tetrahydrofolate + glycine + H2O = (6S)-5,6,7,8-tetrahydrofolate + L-serine. Its pathway is one-carbon metabolism; tetrahydrofolate interconversion. The protein operates within amino-acid biosynthesis; glycine biosynthesis; glycine from L-serine: step 1/1. Functionally, catalyzes the reversible interconversion of serine and glycine with tetrahydrofolate (THF) serving as the one-carbon carrier. This reaction serves as the major source of one-carbon groups required for the biosynthesis of purines, thymidylate, methionine, and other important biomolecules. Also exhibits THF-independent aldolase activity toward beta-hydroxyamino acids, producing glycine and aldehydes, via a retro-aldol mechanism. This Buchnera aphidicola subsp. Acyrthosiphon pisum (strain 5A) protein is Serine hydroxymethyltransferase.